The primary structure comprises 77 residues: Blood-induced peptide 1 (77 aa).

Residues 38–71 are a coiled coil; that stretch reads EDFLHQENSELKKSLKNLEMENEKLKNILKTDYN.

Plays an important role in survival in host blood through increasing tolerance to stresses such as heat, salt, or cycloheximide, which is essential for virulence. The sequence is that of Blood-induced peptide 1 from Candida albicans (strain SC5314 / ATCC MYA-2876) (Yeast).